Here is a 133-residue protein sequence, read N- to C-terminus: Small ribosomal subunit protein uS8 (133 aa).

This sequence belongs to the universal ribosomal protein uS8 family. Part of the 30S ribosomal subunit. Contacts proteins S5 and S12.

One of the primary rRNA binding proteins, it binds directly to 16S rRNA central domain where it helps coordinate assembly of the platform of the 30S subunit. The sequence is that of Small ribosomal subunit protein uS8 from Parasynechococcus marenigrum (strain WH8102).